Reading from the N-terminus, the 397-residue chain is Argininosuccinate synthase (397 aa).

9–17 (AYSGGLDTS) contributes to the ATP binding site. Tyr-87 serves as a coordination point for L-citrulline. Gly-117 provides a ligand contact to ATP. L-aspartate is bound by residues Thr-119, Asn-123, and Asp-124. Position 123 (Asn-123) interacts with L-citrulline. The L-citrulline site is built by Arg-127, Ser-175, Ser-184, Glu-260, and Tyr-272.

It belongs to the argininosuccinate synthase family. Type 1 subfamily. Homotetramer.

It is found in the cytoplasm. It catalyses the reaction L-citrulline + L-aspartate + ATP = 2-(N(omega)-L-arginino)succinate + AMP + diphosphate + H(+). It participates in amino-acid biosynthesis; L-arginine biosynthesis; L-arginine from L-ornithine and carbamoyl phosphate: step 2/3. In Methanococcus maripaludis (strain DSM 14266 / JCM 13030 / NBRC 101832 / S2 / LL), this protein is Argininosuccinate synthase.